The chain runs to 174 residues: Crossover junction endodeoxyribonuclease RuvC (174 aa).

Residues Asp8, Glu69, and Asp141 contribute to the active site. Residues Asp8, Glu69, and Asp141 each contribute to the Mg(2+) site.

Belongs to the RuvC family. In terms of assembly, homodimer which binds Holliday junction (HJ) DNA. The HJ becomes 2-fold symmetrical on binding to RuvC with unstacked arms; it has a different conformation from HJ DNA in complex with RuvA. In the full resolvosome a probable DNA-RuvA(4)-RuvB(12)-RuvC(2) complex forms which resolves the HJ. The cofactor is Mg(2+).

Its subcellular location is the cytoplasm. It catalyses the reaction Endonucleolytic cleavage at a junction such as a reciprocal single-stranded crossover between two homologous DNA duplexes (Holliday junction).. The RuvA-RuvB-RuvC complex processes Holliday junction (HJ) DNA during genetic recombination and DNA repair. Endonuclease that resolves HJ intermediates. Cleaves cruciform DNA by making single-stranded nicks across the HJ at symmetrical positions within the homologous arms, yielding a 5'-phosphate and a 3'-hydroxyl group; requires a central core of homology in the junction. The consensus cleavage sequence is 5'-(A/T)TT(C/G)-3'. Cleavage occurs on the 3'-side of the TT dinucleotide at the point of strand exchange. HJ branch migration catalyzed by RuvA-RuvB allows RuvC to scan DNA until it finds its consensus sequence, where it cleaves and resolves the cruciform DNA. This is Crossover junction endodeoxyribonuclease RuvC from Xanthomonas campestris pv. campestris (strain 8004).